Reading from the N-terminus, the 412-residue chain is Acetylornithine aminotransferase (412 aa).

Residues 109 to 110 (GA) and Phe142 each bind pyridoxal 5'-phosphate. Arg145 is a N(2)-acetyl-L-ornithine binding site. 233–236 (DEVQ) serves as a coordination point for pyridoxal 5'-phosphate. N6-(pyridoxal phosphate)lysine is present on Lys262. Residue Ser289 coordinates N(2)-acetyl-L-ornithine. A pyridoxal 5'-phosphate-binding site is contributed by Thr290.

Belongs to the class-III pyridoxal-phosphate-dependent aminotransferase family. ArgD subfamily. As to quaternary structure, homodimer. Pyridoxal 5'-phosphate serves as cofactor.

The protein resides in the cytoplasm. The enzyme catalyses N(2)-acetyl-L-ornithine + 2-oxoglutarate = N-acetyl-L-glutamate 5-semialdehyde + L-glutamate. It participates in amino-acid biosynthesis; L-arginine biosynthesis; N(2)-acetyl-L-ornithine from L-glutamate: step 4/4. The protein is Acetylornithine aminotransferase of Thermosynechococcus vestitus (strain NIES-2133 / IAM M-273 / BP-1).